Consider the following 212-residue polypeptide: Interleukin-6 (212 aa).

Residues 1 to 29 (MNSLSTSAFSPVAFSLGLLLVMATAFPTP) form the signal peptide. The cysteines at positions 72 and 78 are disulfide-linked. Residue Ser-81 is modified to Phosphoserine. Cys-101 and Cys-111 are oxidised to a cystine. Positions 156 to 175 (QKGKNPDKATTPNPTTNAGL) are disordered. Residues 163–175 (KATTPNPTTNAGL) show a composition bias toward polar residues.

The protein belongs to the IL-6 superfamily. Component of a hexamer of two molecules each of IL6, IL6R and IL6ST; first binds to IL6R to associate with the signaling subunit IL6ST. Interacts with IL6R (via the N-terminal ectodomain); this interaction may be affected by IL6R-binding with SORL1, hence decreasing IL6 cis signaling. Interacts with SORL1 (via the N-terminal ectodomain); this interaction leads to IL6 internalization and lysosomal degradation. May form a trimeric complex with the soluble SORL1 ectodomain and soluble IL6R receptor; this interaction might stabilize circulating IL6, hence promoting IL6 trans signaling.

The protein localises to the secreted. Its function is as follows. Cytokine with a wide variety of biological functions in immunity, tissue regeneration, and metabolism. Binds to IL6R, then the complex associates to the signaling subunit IL6ST/gp130 to trigger the intracellular IL6-signaling pathway. The interaction with the membrane-bound IL6R and IL6ST stimulates 'classic signaling', whereas the binding of IL6 and soluble IL6R to IL6ST stimulates 'trans-signaling'. Alternatively, 'cluster signaling' occurs when membrane-bound IL6:IL6R complexes on transmitter cells activate IL6ST receptors on neighboring receiver cells. IL6 is a potent inducer of the acute phase response. Rapid production of IL6 contributes to host defense during infection and tissue injury, but excessive IL6 synthesis is involved in disease pathology. In the innate immune response, is synthesized by myeloid cells, such as macrophages and dendritic cells, upon recognition of pathogens through toll-like receptors (TLRs) at the site of infection or tissue injury. In the adaptive immune response, is required for the differentiation of B cells into immunoglobulin-secreting cells. Plays a major role in the differentiation of CD4(+) T cell subsets. Essential factor for the development of T follicular helper (Tfh) cells that are required for the induction of germinal-center formation. Required to drive naive CD4(+) T cells to the Th17 lineage. Also required for proliferation of myeloma cells and the survival of plasmablast cells. In terms of biological role, acts as an essential factor in bone homeostasis and on vessels directly or indirectly by induction of VEGF, resulting in increased angiogenesis activity and vascular permeability. Induces, through 'trans-signaling' and synergistically with IL1B and TNF, the production of VEGF. Involved in metabolic controls, is discharged into the bloodstream after muscle contraction increasing lipolysis and improving insulin resistance. 'Trans-signaling' in central nervous system also regulates energy and glucose homeostasis. Mediates, through GLP-1, crosstalk between insulin-sensitive tissues, intestinal L cells and pancreatic islets to adapt to changes in insulin demand. Also acts as a myokine. Plays a protective role during liver injury, being required for maintenance of tissue regeneration. Also has a pivotal role in iron metabolism by regulating HAMP/hepcidin expression upon inflammation or bacterial infection. Through activation of IL6ST-YAP-NOTCH pathway, induces inflammation-induced epithelial regeneration. This Sus scrofa (Pig) protein is Interleukin-6 (IL6).